A 280-amino-acid polypeptide reads, in one-letter code: Energy-coupling factor transporter ATP-binding protein EcfA1 (280 aa).

Residues 6-241 (LRTENISFQY…SHMLQEIGLD (236 aa)) form the ABC transporter domain. 40–47 (GQNGSGKS) is a binding site for ATP.

Belongs to the ABC transporter superfamily. Energy-coupling factor EcfA family. Forms a stable energy-coupling factor (ECF) transporter complex composed of 2 membrane-embedded substrate-binding proteins (S component), 2 ATP-binding proteins (A component) and 2 transmembrane proteins (T component).

It localises to the cell membrane. ATP-binding (A) component of a common energy-coupling factor (ECF) ABC-transporter complex. Unlike classic ABC transporters this ECF transporter provides the energy necessary to transport a number of different substrates. The protein is Energy-coupling factor transporter ATP-binding protein EcfA1 of Bacillus cereus (strain ATCC 10987 / NRS 248).